We begin with the raw amino-acid sequence, 123 residues long: Urotensin-2 (123 aa).

A signal peptide spans 1-20 (MDRVPFCCLLFIGLLNPLLS). 2 propeptides span residues 21 to 104 (LPVT…LART) and 107 to 109 (QHK). Residues 57-88 (RQTMGTEAGESPGEAGPSTETPTPRGSMRKAF) form a disordered region. Cys117 and Cys122 are joined by a disulfide.

It belongs to the urotensin-2 family. Brain specific. Predominantly expressed in motoneurons of the brainstem and spinal cord.

Its subcellular location is the secreted. Functionally, highly potent vasoconstrictor. This is Urotensin-2 (Uts2) from Mus musculus (Mouse).